Reading from the N-terminus, the 185-residue chain is Large ribosomal subunit protein bL25 (185 aa).

It belongs to the bacterial ribosomal protein bL25 family. CTC subfamily. In terms of assembly, part of the 50S ribosomal subunit; part of the 5S rRNA/L5/L18/L25 subcomplex. Contacts the 5S rRNA. Binds to the 5S rRNA independently of L5 and L18.

This is one of the proteins that binds to the 5S RNA in the ribosome where it forms part of the central protuberance. The polypeptide is Large ribosomal subunit protein bL25 (Chlamydia muridarum (strain MoPn / Nigg)).